The following is a 195-amino-acid chain: Imidazoleglycerol-phosphate dehydratase (195 aa).

It belongs to the imidazoleglycerol-phosphate dehydratase family.

It localises to the cytoplasm. The catalysed reaction is D-erythro-1-(imidazol-4-yl)glycerol 3-phosphate = 3-(imidazol-4-yl)-2-oxopropyl phosphate + H2O. Its pathway is amino-acid biosynthesis; L-histidine biosynthesis; L-histidine from 5-phospho-alpha-D-ribose 1-diphosphate: step 6/9. This Polynucleobacter necessarius subsp. necessarius (strain STIR1) protein is Imidazoleglycerol-phosphate dehydratase.